Here is a 250-residue protein sequence, read N- to C-terminus: Pyrroloquinoline-quinone synthase (250 aa).

Belongs to the PqqC family.

It catalyses the reaction 6-(2-amino-2-carboxyethyl)-7,8-dioxo-1,2,3,4,7,8-hexahydroquinoline-2,4-dicarboxylate + 3 O2 = pyrroloquinoline quinone + 2 H2O2 + 2 H2O + H(+). It participates in cofactor biosynthesis; pyrroloquinoline quinone biosynthesis. Ring cyclization and eight-electron oxidation of 3a-(2-amino-2-carboxyethyl)-4,5-dioxo-4,5,6,7,8,9-hexahydroquinoline-7,9-dicarboxylic-acid to PQQ. This Xanthomonas oryzae pv. oryzae (strain PXO99A) protein is Pyrroloquinoline-quinone synthase.